Consider the following 388-residue polypeptide: Chorismate synthase (388 aa).

Arg39 and Arg45 together coordinate NADP(+). Residues 132–134 (RSS), 251–252 (NA), Gly296, 311–315 (KPIPT), and Arg337 each bind FMN.

This sequence belongs to the chorismate synthase family. In terms of assembly, homotetramer. The cofactor is FMNH2.

The catalysed reaction is 5-O-(1-carboxyvinyl)-3-phosphoshikimate = chorismate + phosphate. Its pathway is metabolic intermediate biosynthesis; chorismate biosynthesis; chorismate from D-erythrose 4-phosphate and phosphoenolpyruvate: step 7/7. In terms of biological role, catalyzes the anti-1,4-elimination of the C-3 phosphate and the C-6 proR hydrogen from 5-enolpyruvylshikimate-3-phosphate (EPSP) to yield chorismate, which is the branch point compound that serves as the starting substrate for the three terminal pathways of aromatic amino acid biosynthesis. This reaction introduces a second double bond into the aromatic ring system. This chain is Chorismate synthase, found in Staphylococcus aureus (strain bovine RF122 / ET3-1).